The chain runs to 156 residues: ATP synthase subunit b (156 aa).

A helical transmembrane segment spans residues 11 to 31 (AIAFFIFVVFCMKYVWPPLMA).

This sequence belongs to the ATPase B chain family. F-type ATPases have 2 components, F(1) - the catalytic core - and F(0) - the membrane proton channel. F(1) has five subunits: alpha(3), beta(3), gamma(1), delta(1), epsilon(1). F(0) has three main subunits: a(1), b(2) and c(10-14). The alpha and beta chains form an alternating ring which encloses part of the gamma chain. F(1) is attached to F(0) by a central stalk formed by the gamma and epsilon chains, while a peripheral stalk is formed by the delta and b chains.

Its subcellular location is the cell inner membrane. F(1)F(0) ATP synthase produces ATP from ADP in the presence of a proton or sodium gradient. F-type ATPases consist of two structural domains, F(1) containing the extramembraneous catalytic core and F(0) containing the membrane proton channel, linked together by a central stalk and a peripheral stalk. During catalysis, ATP synthesis in the catalytic domain of F(1) is coupled via a rotary mechanism of the central stalk subunits to proton translocation. Its function is as follows. Component of the F(0) channel, it forms part of the peripheral stalk, linking F(1) to F(0). The polypeptide is ATP synthase subunit b (Aeromonas hydrophila subsp. hydrophila (strain ATCC 7966 / DSM 30187 / BCRC 13018 / CCUG 14551 / JCM 1027 / KCTC 2358 / NCIMB 9240 / NCTC 8049)).